A 327-amino-acid polypeptide reads, in one-letter code: Expansin-B7 (327 aa).

The signal sequence occupies residues 1-30; it reads MAGRSRRRSFWSVGVAAALLCLLAAHGCSA. The segment at 30-88 is disordered; sequence AKHHKPKPTPGGISGNASSSSSNSSTPSIPPPVAPTPTAPTPPIPSPGTGSSNGSSGGG. Residues 44 to 56 are compositionally biased toward low complexity; that stretch reads GNASSSSSNSSTP. N-linked (GlcNAc...) asparagine glycosylation is found at Asn45 and Asn52. Positions 57–75 are enriched in pro residues; it reads SIPPPVAPTPTAPTPPIPS. Asn82 is a glycosylation site (N-linked (GlcNAc...) asparagine). In terms of domain architecture, Expansin-like EG45 spans 112 to 218; it reads GGACGFKNVN…RRVPCQYPGL (107 aa). Intrachain disulfides connect Cys115/Cys143, Cys146/Cys213, and Cys151/Cys157. Residues 231-322 form the Expansin-like CBD domain; the sequence is VYMAILVEYE…DWQPNTVYSS (92 aa). Asn298 carries N-linked (GlcNAc...) asparagine glycosylation.

It belongs to the expansin family. Expansin B subfamily.

It is found in the secreted. Its subcellular location is the cell wall. The protein resides in the membrane. In terms of biological role, may cause loosening and extension of plant cell walls by disrupting non-covalent bonding between cellulose microfibrils and matrix glucans. No enzymatic activity has been found. May be required for rapid internodal elongation in deepwater rice during submergence. This Oryza sativa subsp. japonica (Rice) protein is Expansin-B7 (EXPB7).